A 270-amino-acid polypeptide reads, in one-letter code: 4-hydroxy-tetrahydrodipicolinate reductase (270 aa).

Residues 8-13 and E34 each bind NAD(+); that span reads GAAGRM. R35 provides a ligand contact to NADP(+). NAD(+) is bound by residues 98-100 and 122-125; these read GST and SPNM. The active-site Proton donor/acceptor is the H155. (S)-2,3,4,5-tetrahydrodipicolinate is bound at residue H156. K159 functions as the Proton donor in the catalytic mechanism. 165-166 contributes to the (S)-2,3,4,5-tetrahydrodipicolinate binding site; that stretch reads GT.

This sequence belongs to the DapB family.

The protein localises to the cytoplasm. The enzyme catalyses (S)-2,3,4,5-tetrahydrodipicolinate + NAD(+) + H2O = (2S,4S)-4-hydroxy-2,3,4,5-tetrahydrodipicolinate + NADH + H(+). It carries out the reaction (S)-2,3,4,5-tetrahydrodipicolinate + NADP(+) + H2O = (2S,4S)-4-hydroxy-2,3,4,5-tetrahydrodipicolinate + NADPH + H(+). It functions in the pathway amino-acid biosynthesis; L-lysine biosynthesis via DAP pathway; (S)-tetrahydrodipicolinate from L-aspartate: step 4/4. Its function is as follows. Catalyzes the conversion of 4-hydroxy-tetrahydrodipicolinate (HTPA) to tetrahydrodipicolinate. This chain is 4-hydroxy-tetrahydrodipicolinate reductase, found in Anaeromyxobacter dehalogenans (strain 2CP-1 / ATCC BAA-258).